A 336-amino-acid polypeptide reads, in one-letter code: Holliday junction branch migration complex subunit RuvB (336 aa).

The segment at 1-182 (MKERIVNLET…FGMSFRMQFY (182 aa)) is large ATPase domain (RuvB-L). ATP-binding positions include L21, R22, G63, K66, T67, S68, 129–131 (EDF), R172, Y182, and R219. T67 provides a ligand contact to Mg(2+). The interval 183–253 (SPSELALIIK…ITLHALNELG (71 aa)) is small ATPAse domain (RuvB-S). A head domain (RuvB-H) region spans residues 256 to 336 (ELGFDEADLA…IPTLKSQTLF (81 aa)). R310 and R315 together coordinate DNA.

Belongs to the RuvB family. As to quaternary structure, homohexamer. Forms an RuvA(8)-RuvB(12)-Holliday junction (HJ) complex. HJ DNA is sandwiched between 2 RuvA tetramers; dsDNA enters through RuvA and exits via RuvB. An RuvB hexamer assembles on each DNA strand where it exits the tetramer. Each RuvB hexamer is contacted by two RuvA subunits (via domain III) on 2 adjacent RuvB subunits; this complex drives branch migration. In the full resolvosome a probable DNA-RuvA(4)-RuvB(12)-RuvC(2) complex forms which resolves the HJ.

The protein localises to the cytoplasm. The catalysed reaction is ATP + H2O = ADP + phosphate + H(+). The RuvA-RuvB-RuvC complex processes Holliday junction (HJ) DNA during genetic recombination and DNA repair, while the RuvA-RuvB complex plays an important role in the rescue of blocked DNA replication forks via replication fork reversal (RFR). RuvA specifically binds to HJ cruciform DNA, conferring on it an open structure. The RuvB hexamer acts as an ATP-dependent pump, pulling dsDNA into and through the RuvAB complex. RuvB forms 2 homohexamers on either side of HJ DNA bound by 1 or 2 RuvA tetramers; 4 subunits per hexamer contact DNA at a time. Coordinated motions by a converter formed by DNA-disengaged RuvB subunits stimulates ATP hydrolysis and nucleotide exchange. Immobilization of the converter enables RuvB to convert the ATP-contained energy into a lever motion, pulling 2 nucleotides of DNA out of the RuvA tetramer per ATP hydrolyzed, thus driving DNA branch migration. The RuvB motors rotate together with the DNA substrate, which together with the progressing nucleotide cycle form the mechanistic basis for DNA recombination by continuous HJ branch migration. Branch migration allows RuvC to scan DNA until it finds its consensus sequence, where it cleaves and resolves cruciform DNA. This is Holliday junction branch migration complex subunit RuvB from Helicobacter pylori (strain HPAG1).